The following is a 173-amino-acid chain: RNA 2',3'-cyclic phosphodiesterase (173 aa).

H38 functions as the Proton donor in the catalytic mechanism. 2 short sequence motifs (HXTX) span residues 38 to 41 and 118 to 121; these read HITV and HLTI. Catalysis depends on H118, which acts as the Proton acceptor.

Belongs to the 2H phosphoesterase superfamily. ThpR family.

It carries out the reaction a 3'-end 2',3'-cyclophospho-ribonucleotide-RNA + H2O = a 3'-end 2'-phospho-ribonucleotide-RNA + H(+). Functionally, hydrolyzes RNA 2',3'-cyclic phosphodiester to an RNA 2'-phosphomonoester. The sequence is that of RNA 2',3'-cyclic phosphodiesterase from Methanocaldococcus jannaschii (strain ATCC 43067 / DSM 2661 / JAL-1 / JCM 10045 / NBRC 100440) (Methanococcus jannaschii).